The sequence spans 324 residues: Viral cathepsin (324 aa).

A signal peptide spans 1 to 16 (MNKIVLYLLVYGAVQC). The propeptide at 17–113 (AAYDVLKAPN…VVLDRPPDKG (97 aa)) is activation peptide. Disulfide bonds link C134-C175, C168-C208, and C263-C311. Residue C137 is part of the active site. N159 is a glycosylation site (N-linked (GlcNAc...) asparagine; by host). Catalysis depends on residues H270 and N290.

The protein belongs to the peptidase C1 family. Post-translationally, synthesized as an inactive proenzyme and activated by proteolytic removal of the inhibitory propeptide.

The enzyme catalyses Endopeptidase of broad specificity, hydrolyzing substrates of both cathepsin L and cathepsin B.. Functionally, cysteine protease that plays an essential role in host liquefaction to facilitate horizontal transmission of the virus. May participate in the degradation of foreign protein expressed by the baculovirus system. The chain is Viral cathepsin (Vcath) from Choristoneura fumiferana nuclear polyhedrosis virus (CfMNPV).